A 319-amino-acid chain; its full sequence is MSLNFLDFEQPIAELEAKIDSLTAVSRQDEKLDINIDEEVHRLREKSVELTRKIFADLGAWQVAQLARHPRRPYTLDYVRLAFDEFDELAGDRAFADDKAIVGGIARLDGRPVMIIGHQKGRETKEKIRRNFGMPAPEGYRKALRLMEMAERFKMPIITFIDTPGAYPGVGAEERGQSEAIARNLREMSRLSVPVICTVIGEGGSGGALAIGVGDKVNMLQYSTYSVISPEGCASILWKSADKAPLAAEAMGIIAPRLKELKLIDSIVPEPLGGAHRNPEAMAASLKAQLLADLADLDLLSEEELLNRRYQRLMSYGYA.

One can recognise a CoA carboxyltransferase C-terminal domain in the interval 35 to 296; that stretch reads NIDEEVHRLR…KAQLLADLAD (262 aa).

It belongs to the AccA family. Acetyl-CoA carboxylase is a heterohexamer composed of biotin carboxyl carrier protein (AccB), biotin carboxylase (AccC) and two subunits each of ACCase subunit alpha (AccA) and ACCase subunit beta (AccD).

The protein resides in the cytoplasm. The catalysed reaction is N(6)-carboxybiotinyl-L-lysyl-[protein] + acetyl-CoA = N(6)-biotinyl-L-lysyl-[protein] + malonyl-CoA. The protein operates within lipid metabolism; malonyl-CoA biosynthesis; malonyl-CoA from acetyl-CoA: step 1/1. Its function is as follows. Component of the acetyl coenzyme A carboxylase (ACC) complex. First, biotin carboxylase catalyzes the carboxylation of biotin on its carrier protein (BCCP) and then the CO(2) group is transferred by the carboxyltransferase to acetyl-CoA to form malonyl-CoA. This Klebsiella pneumoniae subsp. pneumoniae (strain ATCC 700721 / MGH 78578) protein is Acetyl-coenzyme A carboxylase carboxyl transferase subunit alpha.